Consider the following 233-residue polypeptide: Lactate utilization protein C (233 aa).

Belongs to the LutC/YkgG family.

Functionally, is involved in L-lactate degradation and allows cells to grow with lactate as the sole carbon source. The polypeptide is Lactate utilization protein C (Oceanobacillus iheyensis (strain DSM 14371 / CIP 107618 / JCM 11309 / KCTC 3954 / HTE831)).